Here is a 1147-residue protein sequence, read N- to C-terminus: uncharacterized protein (1147 aa).

Disordered stretches follow at residues 226–245, 255–297, 431–617, 647–670, 705–945, 1003–1032, and 1060–1090; these read FGQG…GQVD, IQGT…QEKA, SQHP…QSCI, EEMD…DPVR, HRHR…RRLQ, RQQQ…EAEK, and YQRR…RLAQ. The span at 268–296 shows a compositional bias: basic and acidic residues; it reads WQKDETQTEDTSKDNHHCIHTSKENHQEK. A compositionally biased stretch (basic residues) spans 431 to 441; sequence SQHPPKGKAQR. Over residues 538–549 the composition is skewed to low complexity; sequence PAGGALPAAGQA. A compositionally biased stretch (polar residues) spans 584–603; sequence LNETSPLTQKPENQGAQQSL. Positions 743 to 752 are enriched in polar residues; it reads NQKTSNNISN. A coiled-coil region spans residues 743 to 804; the sequence is NQKTSNNISN…ESKAEKKSQL (62 aa). Residues 768–802 are compositionally biased toward basic and acidic residues; sequence TDKSKAPKREKEGKLHEEAEAAVGKSKESKAEKKS. A compositionally biased stretch (basic residues) spans 807-819; the sequence is KGKKTGAKGKRTR. Polar residues predominate over residues 870–884; the sequence is SQVSIDGRSSPTQTA. A compositionally biased stretch (basic and acidic residues) spans 895-945; that stretch reads DRSHEDPSKAFLVKREQEKASRDRLRAERAEMRRLEVERKRREQEEQRRLQ. A coiled-coil region spans residues 907 to 1112; that stretch reads VKREQEKASR…QKDALKKHLH (206 aa).

This is an uncharacterized protein from Bos taurus (Bovine).